The sequence spans 501 residues: Lysine--tRNA ligase (501 aa).

Mg(2+)-binding residues include Glu404 and Glu411.

Belongs to the class-II aminoacyl-tRNA synthetase family. Homodimer. It depends on Mg(2+) as a cofactor.

It is found in the cytoplasm. The catalysed reaction is tRNA(Lys) + L-lysine + ATP = L-lysyl-tRNA(Lys) + AMP + diphosphate. This is Lysine--tRNA ligase from Campylobacter jejuni subsp. doylei (strain ATCC BAA-1458 / RM4099 / 269.97).